A 157-amino-acid polypeptide reads, in one-letter code: Protein Smg (157 aa).

Belongs to the Smg family.

The chain is Protein Smg from Shigella boydii serotype 18 (strain CDC 3083-94 / BS512).